A 414-amino-acid chain; its full sequence is 5-aminolevulinate synthase (414 aa).

3 residues coordinate substrate: Arg22, Ser133, and Lys152. Pyridoxal 5'-phosphate is bound by residues Ser185, His213, and Thr241. Residue Lys244 is part of the active site. Lys244 bears the N6-(pyridoxal phosphate)lysine mark. The pyridoxal 5'-phosphate site is built by Thr273 and Thr274. Thr359 contributes to the substrate binding site.

It belongs to the class-II pyridoxal-phosphate-dependent aminotransferase family. Homodimer. Pyridoxal 5'-phosphate is required as a cofactor.

It catalyses the reaction succinyl-CoA + glycine + H(+) = 5-aminolevulinate + CO2 + CoA. Its pathway is porphyrin-containing compound metabolism; protoporphyrin-IX biosynthesis; 5-aminolevulinate from glycine: step 1/1. The polypeptide is 5-aminolevulinate synthase (hemA) (Rickettsia typhi (strain ATCC VR-144 / Wilmington)).